The sequence spans 588 residues: Sulfite reductase [NADPH] hemoprotein beta-component (588 aa).

Positions 443, 449, 488, and 492 each coordinate [4Fe-4S] cluster. Cys-492 provides a ligand contact to siroheme.

It belongs to the nitrite and sulfite reductase 4Fe-4S domain family. Alpha(8)-beta(8). The alpha component is a flavoprotein, the beta component is a hemoprotein. Siroheme is required as a cofactor. The cofactor is [4Fe-4S] cluster.

It carries out the reaction hydrogen sulfide + 3 NADP(+) + 3 H2O = sulfite + 3 NADPH + 4 H(+). The protein operates within sulfur metabolism; hydrogen sulfide biosynthesis; hydrogen sulfide from sulfite (NADPH route): step 1/1. Component of the sulfite reductase complex that catalyzes the 6-electron reduction of sulfite to sulfide. This is one of several activities required for the biosynthesis of L-cysteine from sulfate. The polypeptide is Sulfite reductase [NADPH] hemoprotein beta-component (Actinobacillus succinogenes (strain ATCC 55618 / DSM 22257 / CCUG 43843 / 130Z)).